A 298-amino-acid polypeptide reads, in one-letter code: Probable 3-hydroxyacyl-CoA dehydrogenase F54C8.1 (298 aa).

This sequence belongs to the 3-hydroxyacyl-CoA dehydrogenase family. Homodimer.

It is found in the mitochondrion matrix. It carries out the reaction a (3S)-3-hydroxyacyl-CoA + NAD(+) = a 3-oxoacyl-CoA + NADH + H(+). The protein operates within lipid metabolism; fatty acid beta-oxidation. This chain is Probable 3-hydroxyacyl-CoA dehydrogenase F54C8.1, found in Caenorhabditis elegans.